The primary structure comprises 133 residues: Phosphoribosyl-AMP cyclohydrolase (133 aa).

Residue aspartate 77 coordinates Mg(2+). Cysteine 78 is a Zn(2+) binding site. The Mg(2+) site is built by aspartate 79 and aspartate 81. The Zn(2+) site is built by cysteine 95 and cysteine 102.

The protein belongs to the PRA-CH family. Homodimer. The cofactor is Mg(2+). Zn(2+) is required as a cofactor.

The protein localises to the cytoplasm. The catalysed reaction is 1-(5-phospho-beta-D-ribosyl)-5'-AMP + H2O = 1-(5-phospho-beta-D-ribosyl)-5-[(5-phospho-beta-D-ribosylamino)methylideneamino]imidazole-4-carboxamide. It participates in amino-acid biosynthesis; L-histidine biosynthesis; L-histidine from 5-phospho-alpha-D-ribose 1-diphosphate: step 3/9. Its function is as follows. Catalyzes the hydrolysis of the adenine ring of phosphoribosyl-AMP. The polypeptide is Phosphoribosyl-AMP cyclohydrolase (Thiobacillus denitrificans (strain ATCC 25259 / T1)).